Reading from the N-terminus, the 839-residue chain is Probable beta-glucosidase I (839 aa).

An N-linked (GlcNAc...) asparagine glycan is attached at asparagine 197. Aspartate 225 is an active-site residue. The 161-residue stretch at aspartate 396–valine 556 folds into the PA14 domain. A glycan (N-linked (GlcNAc...) asparagine) is linked at asparagine 494.

Belongs to the glycosyl hydrolase 3 family.

It localises to the secreted. It catalyses the reaction Hydrolysis of terminal, non-reducing beta-D-glucosyl residues with release of beta-D-glucose.. It functions in the pathway glycan metabolism; cellulose degradation. Its function is as follows. Beta-glucosidases are one of a number of cellulolytic enzymes, and catalyze the last step releasing glucose from the inhibitory cellobiose. The polypeptide is Probable beta-glucosidase I (bglI) (Emericella nidulans (strain FGSC A4 / ATCC 38163 / CBS 112.46 / NRRL 194 / M139) (Aspergillus nidulans)).